Consider the following 664-residue polypeptide: Cytoskeleton-associated protein 2 (664 aa).

The interval 1–38 (MAESRKRFLGRAARNPLPVTRDLQLPPTRRDQPAFREQ) is disordered. The span at 28 to 38 (TRRDQPAFREQ) shows a compositional bias: basic and acidic residues. The interval 160–319 (PKQDSNVSKK…ASKDAARTDS (160 aa)) is association with alpha- and beta-tubulin. At Ser-186 the chain carries Phosphoserine. Disordered stretches follow at residues 254-273 (IRSLHSSSHGAAKQGLSRPL), 283-328 (LDKE…MVKP), 366-393 (GKGKGLKRPPHSVVTQAEPKGQSENPVG), and 512-545 (AHATKEPIQEVNADANVGSGKPGEENEHHGKVEV). Polar residues predominate over residues 300–309 (GSSQAPSRSI). Positions 366–375 (GKGKGLKRPP) are enriched in basic residues. The span at 533 to 545 (PGEENEHHGKVEV) shows a compositional bias: basic and acidic residues. A Phosphothreonine modification is found at Thr-561. The residue at position 577 (Ser-577) is a Phosphoserine. Thr-579 carries the phosphothreonine modification. Ser-584 is modified (phosphoserine).

This sequence belongs to the CKAP2 family. In terms of assembly, associates with alpha- and beta-tubulins.

The protein resides in the cytoplasm. Its subcellular location is the cytoskeleton. The protein localises to the spindle. It localises to the spindle pole. Its function is as follows. Possesses microtubule stabilizing properties. Involved in regulating aneuploidy, cell cycling, and cell death in a p53-dependent manner. This is Cytoskeleton-associated protein 2 from Mus musculus (Mouse).